The sequence spans 320 residues: Mas-related G-protein coupled receptor member D (320 aa).

Over 1–33 (MNQTLNSSGTAELALNHSRGSVVHAACLVLSSL) the chain is Extracellular. N-linked (GlcNAc...) asparagine glycosylation is found at N2, N6, and N16. Residues 34-54 (AMFTCLCGMAGNSMVIWLLGF) traverse the membrane as a helical segment. Over 55-62 (RMRRTPFS) the chain is Cytoplasmic. The helical transmembrane segment at 63 to 83 (IYILNLAAADLLFVFCMAAML) threads the bilayer. The Extracellular segment spans residues 84-112 (SLETQPLVSTTDKVHELMKRLKYFAYTVG). The helical transmembrane segment at 113-133 (LSLLTAISTQRCLSVLFPIWF) threads the bilayer. The Cytoplasmic portion of the chain corresponds to 134-142 (KCHRPRHLS). A helical transmembrane segment spans residues 143–163 (AWVCALLWMLCLLTNGLTSCF). The Extracellular segment spans residues 164 to 182 (CSKFLKFNKDQCFRVDMVQ). Residues 183–203 (AALIMGVLTPVMTLSSLTLFV) form a helical membrane-spanning segment. The Cytoplasmic segment spans residues 204 to 218 (RVRRSSQQWRRQPTR). Residues 219-239 (LFVVVLASVLVFLICSLPLGF) traverse the membrane as a helical segment. Over 240–257 (YWFVLYWLNLPPDTKVLY) the chain is Extracellular. Residues 258–280 (FNLSRLSSSMSSSANPLIYFLVG) form a helical membrane-spanning segment. Topologically, residues 281–320 (SRRSRRLQGSLGTVLQRALREEPELEGGETPTTGTNEMGA) are cytoplasmic. A disordered region spans residues 301-320 (EEPELEGGETPTTGTNEMGA). Over residues 308 to 320 (GETPTTGTNEMGA) the composition is skewed to low complexity.

Belongs to the G-protein coupled receptor 1 family. Mas subfamily. As to expression, co-expressed in the small diameter neurons with P2X3 and VR1 in dorsal root ganglia.

The protein localises to the cell membrane. Its function is as follows. May regulate nociceptor function and/or development, including the sensation or modulation of pain. Functions as a specific membrane receptor for beta-alanine. The receptor couples with G-protein G(q) and G(i). This chain is Mas-related G-protein coupled receptor member D (MRGPRD), found in Macaca fascicularis (Crab-eating macaque).